Consider the following 231-residue polypeptide: 7-cyano-7-deazaguanine synthase (231 aa).

8–18 contacts ATP; it reads FSGGQDSTTCL. Residues C188, C197, C200, and C203 each coordinate Zn(2+).

Belongs to the QueC family. The cofactor is Zn(2+).

It carries out the reaction 7-carboxy-7-deazaguanine + NH4(+) + ATP = 7-cyano-7-deazaguanine + ADP + phosphate + H2O + H(+). Its pathway is purine metabolism; 7-cyano-7-deazaguanine biosynthesis. Functionally, catalyzes the ATP-dependent conversion of 7-carboxy-7-deazaguanine (CDG) to 7-cyano-7-deazaguanine (preQ(0)). The sequence is that of 7-cyano-7-deazaguanine synthase from Salmonella arizonae (strain ATCC BAA-731 / CDC346-86 / RSK2980).